The following is a 266-amino-acid chain: Autophagy protein 5 (266 aa).

A Glycyl lysine isopeptide (Lys-Gly) (interchain with G-Cter in atg12) cross-link involves residue Lys97. Over residues Ser158–Thr179 the composition is skewed to low complexity. Residues Ser158–Pro182 are disordered.

The protein belongs to the ATG5 family. In terms of assembly, conjugated with atg12. In terms of processing, conjugated to atg12; which is essential for autophagy.

It localises to the preautophagosomal structure membrane. Its function is as follows. Involved in cytoplasm to vacuole transport (Cvt) and autophagic vesicle formation. Autophagy is essential for maintenance of amino acid levels and protein synthesis under nitrogen starvation. Required for selective autophagic degradation of the nucleus (nucleophagy). Also required for mitophagy, which eliminates defective or superfluous mitochondria in order to fulfill cellular energy requirements and prevent excess ROS production. Conjugation with atg12, through a ubiquitin-like conjugating system involving atg7 as an E1-like activating enzyme and atg10 as an E2-like conjugating enzyme, is essential for its function. The atg12-atg5 conjugate acts as an E3-like enzyme which is required for lipidation of atg8 and atg8 association to the vesicle membranes. This Sclerotinia sclerotiorum (strain ATCC 18683 / 1980 / Ss-1) (White mold) protein is Autophagy protein 5 (atg5).